We begin with the raw amino-acid sequence, 520 residues long: 5'-nucleotidase domain-containing protein 2 (520 aa).

Residue D73 is the Nucleophile of the active site. 3 residues coordinate Mg(2+): D73, D75, and D358. The Proton donor role is filled by D75.

This sequence belongs to the 5'(3')-deoxyribonucleotidase family. Interacts with tyrosine 3-monooxygenase TH; the interaction results in reduced phosphorylation and decreased catalytic activity of TH.

Its subcellular location is the cytoplasm. Promotes dephosphorylation of tyrosine 3-monooxygenase TH which decreases TH catalytic activity and leads to reduced synthesis of catecholamines including dopamine, noradrenaline and adrenaline. The exact mechanism of activity is unknown but may act as a phosphatase or promote the activity of phosphatases or may inhibit phosphorylation by acting as a barrier to interfere with protein kinase access. The protein is 5'-nucleotidase domain-containing protein 2 (NT5DC2) of Homo sapiens (Human).